The sequence spans 428 residues: C4-dicarboxylate transport protein (428 aa).

9 consecutive transmembrane segments (helical) span residues 8–28, 44–64, 76–96, 142–162, 184–204, 222–242, 289–309, 326–346, and 352–372; these read SLYV…HFYP, LIKM…IAGM, VALL…LIIV, IGAF…LFGF, VIFG…FGAM, LIIC…GSIA, VVGL…SIYL, IFHQ…AAGV, and IVLA…LALI.

This sequence belongs to the dicarboxylate/amino acid:cation symporter (DAACS) (TC 2.A.23) family.

The protein resides in the cell inner membrane. Responsible for the transport of dicarboxylates such as succinate, fumarate, and malate from the periplasm across the membrane. In Klebsiella pneumoniae (strain 342), this protein is C4-dicarboxylate transport protein.